The following is a 241-amino-acid chain: Nickel import ATP-binding protein LarO (241 aa).

In terms of domain architecture, ABC transporter spans Ile2 to Thr240. An ATP-binding site is contributed by Gly34–Ser41.

It belongs to the ABC transporter superfamily. As to quaternary structure, may form an energy-coupling factor (ECF) transporter complex composed of an ATP-binding protein (A component, LarO), a transmembrane protein (T component, LarQ) and a fused possible substrate-capture protein (S component, LarMN) of unknown stoichiometry.

It localises to the cell membrane. Its function is as follows. Probable ATP-binding component of the energy-coupling factor (ECF) transporter complex LarMNQO involved in nickel import. LarO is presumably responsible for energy coupling to the transport system. The sequence is that of Nickel import ATP-binding protein LarO from Lactiplantibacillus plantarum (strain ATCC BAA-793 / NCIMB 8826 / WCFS1) (Lactobacillus plantarum).